A 317-amino-acid chain; its full sequence is Acetyl-coenzyme A carboxylase carboxyl transferase subunit alpha (317 aa).

Residues 39 to 293 (RLESKAAAAL…GDALAEALTG (255 aa)) form the CoA carboxyltransferase C-terminal domain.

The protein belongs to the AccA family. As to quaternary structure, acetyl-CoA carboxylase is a heterohexamer composed of biotin carboxyl carrier protein (AccB), biotin carboxylase (AccC) and two subunits each of ACCase subunit alpha (AccA) and ACCase subunit beta (AccD).

The protein resides in the cytoplasm. It carries out the reaction N(6)-carboxybiotinyl-L-lysyl-[protein] + acetyl-CoA = N(6)-biotinyl-L-lysyl-[protein] + malonyl-CoA. It functions in the pathway lipid metabolism; malonyl-CoA biosynthesis; malonyl-CoA from acetyl-CoA: step 1/1. Functionally, component of the acetyl coenzyme A carboxylase (ACC) complex. First, biotin carboxylase catalyzes the carboxylation of biotin on its carrier protein (BCCP) and then the CO(2) group is transferred by the carboxyltransferase to acetyl-CoA to form malonyl-CoA. The sequence is that of Acetyl-coenzyme A carboxylase carboxyl transferase subunit alpha from Methylobacterium nodulans (strain LMG 21967 / CNCM I-2342 / ORS 2060).